A 393-amino-acid polypeptide reads, in one-letter code: Lipoyl synthase, mitochondrial (393 aa).

7 residues coordinate [4Fe-4S] cluster: cysteine 115, cysteine 120, cysteine 126, cysteine 146, cysteine 150, cysteine 153, and serine 362. The Radical SAM core domain occupies 131 to 351; the sequence is ETGTATATIM…RILGMDMGFR (221 aa).

This sequence belongs to the radical SAM superfamily. Lipoyl synthase family. [4Fe-4S] cluster is required as a cofactor.

The protein localises to the mitochondrion. It catalyses the reaction [[Fe-S] cluster scaffold protein carrying a second [4Fe-4S](2+) cluster] + N(6)-octanoyl-L-lysyl-[protein] + 2 oxidized [2Fe-2S]-[ferredoxin] + 2 S-adenosyl-L-methionine + 4 H(+) = [[Fe-S] cluster scaffold protein] + N(6)-[(R)-dihydrolipoyl]-L-lysyl-[protein] + 4 Fe(3+) + 2 hydrogen sulfide + 2 5'-deoxyadenosine + 2 L-methionine + 2 reduced [2Fe-2S]-[ferredoxin]. It participates in protein modification; protein lipoylation via endogenous pathway; protein N(6)-(lipoyl)lysine from octanoyl-[acyl-carrier-protein]: step 2/2. Its function is as follows. Catalyzes the radical-mediated insertion of two sulfur atoms into the C-6 and C-8 positions of the octanoyl moiety bound to the lipoyl domains of lipoate-dependent enzymes, thereby converting the octanoylated domains into lipoylated derivatives. This is Lipoyl synthase, mitochondrial from Vitis vinifera (Grape).